Consider the following 635-residue polypeptide: 1-deoxy-D-xylulose-5-phosphate synthase (635 aa).

Residues His72 and 113-115 (GHA) each bind thiamine diphosphate. Asp144 contacts Mg(2+). Residues 145–146 (GA), Asn174, Tyr286, and Glu369 each bind thiamine diphosphate. Position 174 (Asn174) interacts with Mg(2+).

The protein belongs to the transketolase family. DXPS subfamily. Homodimer. The cofactor is Mg(2+). Requires thiamine diphosphate as cofactor.

It carries out the reaction D-glyceraldehyde 3-phosphate + pyruvate + H(+) = 1-deoxy-D-xylulose 5-phosphate + CO2. The protein operates within metabolic intermediate biosynthesis; 1-deoxy-D-xylulose 5-phosphate biosynthesis; 1-deoxy-D-xylulose 5-phosphate from D-glyceraldehyde 3-phosphate and pyruvate: step 1/1. Functionally, catalyzes the acyloin condensation reaction between C atoms 2 and 3 of pyruvate and glyceraldehyde 3-phosphate to yield 1-deoxy-D-xylulose-5-phosphate (DXP). This Acaryochloris marina (strain MBIC 11017) protein is 1-deoxy-D-xylulose-5-phosphate synthase.